A 247-amino-acid polypeptide reads, in one-letter code: 2,3-bisphosphoglycerate-dependent phosphoglycerate mutase (247 aa).

Residues 8–15 (RHGESQWN), 21–22 (TG), arginine 60, 87–90 (ERHY), lysine 98, 114–115 (RR), and 183–184 (GN) each bind substrate. Histidine 9 acts as the Tele-phosphohistidine intermediate in catalysis. Glutamate 87 acts as the Proton donor/acceptor in catalysis.

It belongs to the phosphoglycerate mutase family. BPG-dependent PGAM subfamily.

It carries out the reaction (2R)-2-phosphoglycerate = (2R)-3-phosphoglycerate. The protein operates within carbohydrate degradation; glycolysis; pyruvate from D-glyceraldehyde 3-phosphate: step 3/5. In terms of biological role, catalyzes the interconversion of 2-phosphoglycerate and 3-phosphoglycerate. This chain is 2,3-bisphosphoglycerate-dependent phosphoglycerate mutase, found in Chlorobium phaeovibrioides (strain DSM 265 / 1930) (Prosthecochloris vibrioformis (strain DSM 265)).